A 519-amino-acid chain; its full sequence is NAD-dependent histone deacetylase SIR2 (519 aa).

The tract at residues 154–212 (EIDENDNKNDGTNNSDIDSDIDSNSDMDSQSESGELDDAMDVDDSLSENEDEYDQDMST) is disordered. The segment covering 187–208 (GELDDAMDVDDSLSENEDEYDQ) has biased composition (acidic residues). Positions 221 to 486 (MTPFKYKLPD…SYLCKCLKWD (266 aa)) constitute a Deacetylase sirtuin-type domain. NAD(+) is bound by residues 246–265 (GAGISTSLGIPDFRSFKGLY) and 328–331 (QNID). The active-site Proton acceptor is H348. Zn(2+) is bound by residues C356, C359, C380, and C383. NAD(+)-binding positions include 430 to 432 (GTS), 455 to 457 (NKD), and C472.

This sequence belongs to the sirtuin family. Class I subfamily. Interacts with HXK1. Requires Zn(2+) as cofactor.

The protein localises to the nucleus. It catalyses the reaction N(6)-acetyl-L-lysyl-[protein] + NAD(+) + H2O = 2''-O-acetyl-ADP-D-ribose + nicotinamide + L-lysyl-[protein]. Functionally, NAD-dependent deacetylase. Heterochromatin component that silences transcription at silent mating loci, telomeres and the ribosomal DNA, and that also suppresses recombination in the rDNA and extends replicative life span. It acts as a NAD-dependent histone deacetylase, which deacetylates 'Lys-9' and 'Lys-14' of Histone H3 and 'Lys-16' of Histone H4. Functions in the distribution of oxidatively damaged proteins during cell division. Mediates phenotypic switching. This is NAD-dependent histone deacetylase SIR2 from Candida albicans (strain SC5314 / ATCC MYA-2876) (Yeast).